Consider the following 118-residue polypeptide: Ribosome-binding factor A (118 aa).

This sequence belongs to the RbfA family. Monomer. Binds 30S ribosomal subunits, but not 50S ribosomal subunits or 70S ribosomes.

Its subcellular location is the cytoplasm. Functionally, one of several proteins that assist in the late maturation steps of the functional core of the 30S ribosomal subunit. Associates with free 30S ribosomal subunits (but not with 30S subunits that are part of 70S ribosomes or polysomes). Required for efficient processing of 16S rRNA. May interact with the 5'-terminal helix region of 16S rRNA. The sequence is that of Ribosome-binding factor A from Latilactobacillus sakei subsp. sakei (strain 23K) (Lactobacillus sakei subsp. sakei).